We begin with the raw amino-acid sequence, 163 residues long: Neurotrophin-3 (163 aa).

An N-terminal signal peptide occupies residues 1 to 3 (IQS). Positions 4–119 (TSMDQGILTE…VLNRTSRRKR (116 aa)) are excised as a propeptide. N-linked (GlcNAc...) asparagine glycosylation occurs at Asn112.

This sequence belongs to the NGF-beta family.

It is found in the secreted. Functionally, seems to promote the survival of visceral and proprioceptive sensory neurons. This Chilabothrus striatus (Haitian boa constrictor) protein is Neurotrophin-3 (NTF3).